The sequence spans 316 residues: Arginine transport system permease protein ArgU (316 aa).

Residues Met1–Gln14 show a composition bias toward polar residues. Residues Met1–Ala20 form a disordered region. 6 helical membrane-spanning segments follow: residues Trp29–Asn49, Ile74–Met94, Leu108–Leu128, Met151–Val171, Leu217–Tyr237, and Val251–Gly271. Residues Ala70–Tyr274 form the ABC transmembrane type-1 domain.

Belongs to the binding-protein-dependent transport system permease family. The complex is probably composed of two ATP-binding proteins (ArgV), two transmembrane proteins (ArgU) and a solute-binding protein (ArgT).

The protein resides in the cell membrane. Functionally, part of the ABC transporter complex ArgTUV involved in L-arginine import. May also transport L-citrulline. Probably responsible for the translocation of the substrate across the membrane. This chain is Arginine transport system permease protein ArgU, found in Corynebacterium glutamicum (strain ATCC 13032 / DSM 20300 / JCM 1318 / BCRC 11384 / CCUG 27702 / LMG 3730 / NBRC 12168 / NCIMB 10025 / NRRL B-2784 / 534).